Reading from the N-terminus, the 447-residue chain is Phosphoglucosamine mutase (447 aa).

Residue Ser101 is the Phosphoserine intermediate of the active site. Mg(2+) contacts are provided by Ser101, Asp242, Asp244, and Asp246. Ser101 is modified (phosphoserine).

This sequence belongs to the phosphohexose mutase family. Requires Mg(2+) as cofactor. Activated by phosphorylation.

It carries out the reaction alpha-D-glucosamine 1-phosphate = D-glucosamine 6-phosphate. Functionally, catalyzes the conversion of glucosamine-6-phosphate to glucosamine-1-phosphate. This Bradyrhizobium diazoefficiens (strain JCM 10833 / BCRC 13528 / IAM 13628 / NBRC 14792 / USDA 110) protein is Phosphoglucosamine mutase.